Here is a 327-residue protein sequence, read N- to C-terminus: GTPase Obg (327 aa).

An Obg domain is found at 2–160; it reads HLFKDSLNLI…LNLRLELSLI (159 aa). Positions 161 to 326 constitute an OBG-type G domain; that stretch reads ADIGLVGLPN…LVSEFFSLVK (166 aa). Residues 167 to 174, 192 to 196, 213 to 216, 280 to 283, and 307 to 309 contribute to the GTP site; these read GLPNAGKS, FTTKI, DLPG, SKLD, and SIY. Residues Ser-174 and Thr-194 each contribute to the Mg(2+) site.

Belongs to the TRAFAC class OBG-HflX-like GTPase superfamily. OBG GTPase family. Monomer. Requires Mg(2+) as cofactor.

It localises to the cytoplasm. Its function is as follows. An essential GTPase which binds GTP, GDP and possibly (p)ppGpp with moderate affinity, with high nucleotide exchange rates and a fairly low GTP hydrolysis rate. Plays a role in control of the cell cycle, stress response, ribosome biogenesis and in those bacteria that undergo differentiation, in morphogenesis control. The protein is GTPase Obg of Borrelia duttonii (strain Ly).